The primary structure comprises 100 residues: Integration host factor subunit alpha (100 aa).

The interval 53-72 (FDLRDKRQRPGRNPKTGEEI) is disordered.

The protein belongs to the bacterial histone-like protein family. Heterodimer of an alpha and a beta chain.

This protein is one of the two subunits of integration host factor, a specific DNA-binding protein that functions in genetic recombination as well as in transcriptional and translational control. The chain is Integration host factor subunit alpha from Stutzerimonas stutzeri (strain A1501) (Pseudomonas stutzeri).